The following is a 272-amino-acid chain: Putative pyruvate, phosphate dikinase regulatory protein (272 aa).

Residue 154 to 161 (GVSRTSKS) coordinates ADP.

Belongs to the pyruvate, phosphate/water dikinase regulatory protein family. PDRP subfamily.

It catalyses the reaction N(tele)-phospho-L-histidyl/L-threonyl-[pyruvate, phosphate dikinase] + ADP = N(tele)-phospho-L-histidyl/O-phospho-L-threonyl-[pyruvate, phosphate dikinase] + AMP + H(+). The enzyme catalyses N(tele)-phospho-L-histidyl/O-phospho-L-threonyl-[pyruvate, phosphate dikinase] + phosphate + H(+) = N(tele)-phospho-L-histidyl/L-threonyl-[pyruvate, phosphate dikinase] + diphosphate. In terms of biological role, bifunctional serine/threonine kinase and phosphorylase involved in the regulation of the pyruvate, phosphate dikinase (PPDK) by catalyzing its phosphorylation/dephosphorylation. In Wolbachia sp. subsp. Brugia malayi (strain TRS), this protein is Putative pyruvate, phosphate dikinase regulatory protein.